The chain runs to 101 residues: MSVIYNKDPRDVIIRPVVSEKSYGLIDEGKYTFQVDPSANKTEIKYAIEHIFGVKVASVNTLNRPGKRKRTRFGWGQRKATKRAVVSLREGSIDIFGGPLS.

It belongs to the universal ribosomal protein uL23 family. As to quaternary structure, part of the 50S ribosomal subunit. Contacts protein L29, and trigger factor when it is bound to the ribosome.

Functionally, one of the early assembly proteins it binds 23S rRNA. One of the proteins that surrounds the polypeptide exit tunnel on the outside of the ribosome. Forms the main docking site for trigger factor binding to the ribosome. In Kocuria rhizophila (strain ATCC 9341 / DSM 348 / NBRC 103217 / DC2201), this protein is Large ribosomal subunit protein uL23.